The following is a 418-amino-acid chain: L-rhamnose isomerase (418 aa).

Histidine 262, aspartate 294, and aspartate 296 together coordinate Mn(2+).

Belongs to the rhamnose isomerase family. As to quaternary structure, homotetramer. Requires Mn(2+) as cofactor.

It localises to the cytoplasm. The catalysed reaction is L-rhamnopyranose = L-rhamnulose. It functions in the pathway carbohydrate degradation; L-rhamnose degradation; glycerone phosphate from L-rhamnose: step 1/3. In terms of biological role, catalyzes the interconversion of L-rhamnose and L-rhamnulose. The sequence is that of L-rhamnose isomerase from Cronobacter sakazakii (strain ATCC BAA-894) (Enterobacter sakazakii).